Here is a 592-residue protein sequence, read N- to C-terminus: Protein kinase C zeta type (592 aa).

Residues 15–98 (RVRLKAHYGG…EVLIIHVFPS (84 aa)) form the PB1 domain. Positions 79-145 (AFRLVCQGRD…KRFNRGAYCG (67 aa)) are interaction with SQSTM1. The Phorbol-ester/DAG-type zinc finger occupies 130–180 (GHLFQAKRFNRGAYCGQCSERIWGLSRQGYRCINCKLLVHKRCHVLVPLTC). Residues 252-518 (FDLIRVIGRG…FSDIKSHAFF (267 aa)) form the Protein kinase domain. ATP is bound by residues 258 to 266 (IGRGSYAKV) and Lys-281. Catalysis depends on Asp-376, which acts as the Proton acceptor. The residue at position 410 (Thr-410) is a Phosphothreonine; by PDPK1 and PI3K. Positions 519–590 (RSIDWDLLEK…INPLLLSAEE (72 aa)) constitute an AGC-kinase C-terminal domain. A Phosphothreonine modification is found at Thr-560. Position 591 is a phosphoserine (Ser-591).

The protein belongs to the protein kinase superfamily. AGC Ser/Thr protein kinase family. PKC subfamily. Interacts directly with SQSTM1. Forms a ternary complex with SQSTM1 and KCNAB2. Forms another ternary complex with SQSTM1 and GABRR3. Forms a complex with SQSTM1 and MAP2K5. Interacts with PARD6A, PARD6B and PARD6G. Part of a complex with PARD3, PARD6A or PARD6B or PARD6G and CDC42 or RAC1. Interacts with ADAP1/CENTA1. Interacts (via the protein kinase domain) with WWC1. Forms a tripartite complex with WWC1 and DDR1, but predominantly in the absence of collagen. Interacts with PDPK1 (via N-terminal region). Interacts with WDFY2 (via WD repeats 1-3). Interacts with VAMP2. Forms a complex with WDFY2 and VAMP2. Interacts with APPL1. Interacts with WWC1, WWC2 and WWC3. In terms of processing, CDH5 is required for its phosphorylation at Thr-410. Phosphorylated by protein kinase PDPK1; phosphorylation is inhibited by the apoptotic C-terminal cleavage product of PKN2. Phosphorylation at Thr-410 by PI3K activates the kinase. Isoform 1: In brain, highly expressed in cerebellar granule neurons and cerebellar astrocytes (at protein level). Expressed at low levels in testes, lung and kidney. Isoform 2: Specifically expressed in brain where it localizes to cerebellar granule neurons (at protein level).

Its subcellular location is the cytoplasm. It localises to the endosome. It is found in the cell junction. The protein resides in the membrane. The catalysed reaction is L-seryl-[protein] + ATP = O-phospho-L-seryl-[protein] + ADP + H(+). The enzyme catalyses L-threonyl-[protein] + ATP = O-phospho-L-threonyl-[protein] + ADP + H(+). Atypical PKCs (PRKCI and PRKCZ) exhibit an elevated basal enzymatic activity (that may be due to the interaction with SMG1 or SQSTM1) and are not regulated by diacylglycerol, phosphatidylserine, phorbol esters or calcium ions. Two specific sites, Thr-410 (activation loop of the kinase domain) and Thr-560 (turn motif), need to be phosphorylated for its full activation. Phosphatidylinositol 3,4,5-trisphosphate might be a physiological activator. Isoform 2: Constitutively active. Calcium- and diacylglycerol-independent serine/threonine-protein kinase that functions in phosphatidylinositol 3-kinase (PI3K) pathway and mitogen-activated protein (MAP) kinase cascade, and is involved in NF-kappa-B activation, mitogenic signaling, cell proliferation, cell polarity, inflammatory response and maintenance of long-term potentiation (LTP). Upon lipopolysaccharide (LPS) treatment in macrophages, or following mitogenic stimuli, functions downstream of PI3K to activate MAP2K1/MEK1-MAPK1/ERK2 signaling cascade independently of RAF1 activation. Required for insulin-dependent activation of AKT3, but may function as an adapter rather than a direct activator. Upon insulin treatment may act as a downstream effector of PI3K and contribute to the activation of translocation of the glucose transporter SLC2A4/GLUT4 and subsequent glucose transport in adipocytes. In EGF-induced cells, binds and activates MAP2K5/MEK5-MAPK7/ERK5 independently of its kinase activity and can activate JUN promoter through MEF2C. Through binding with SQSTM1/p62, functions in interleukin-1 signaling and activation of NF-kappa-B with the specific adapters RIPK1 and TRAF6. Participates in TNF-dependent transactivation of NF-kappa-B by phosphorylating and activating IKBKB kinase, which in turn leads to the degradation of NF-kappa-B inhibitors. In migrating astrocytes, forms a cytoplasmic complex with PARD6A and is recruited by CDC42 to function in the establishment of cell polarity along with the microtubule motor and dynein. In association with FEZ1, stimulates neuronal differentiation in PC12 cells. In the inflammatory response, is required for the T-helper 2 (Th2) differentiation process, including interleukin production, efficient activation of JAK1 and the subsequent phosphorylation and nuclear translocation of STAT6. May be involved in development of allergic airway inflammation (asthma), a process dependent on Th2 immune response. In the NF-kappa-B-mediated inflammatory response, can relieve SETD6-dependent repression of NF-kappa-B target genes by phosphorylating the RELA subunit at 'Ser-311'. Phosphorylates VAMP2 in vitro. Phosphorylates and activates LRRK1, which phosphorylates RAB proteins involved in intracellular trafficking. Its function is as follows. Involved in late synaptic long term potentiation phase in CA1 hippocampal cells and long term memory maintenance. The sequence is that of Protein kinase C zeta type (Prkcz) from Mus musculus (Mouse).